Reading from the N-terminus, the 212-residue chain is Translation initiation factor IF-3 (212 aa).

Residues 171–212 (PKSASKKGHTPPKTQVEASKQANESAETEEEKKRCHPTKPVL) form a disordered region. Residues 182-195 (PKTQVEASKQANES) show a composition bias toward polar residues.

It belongs to the IF-3 family. In terms of assembly, monomer.

Its subcellular location is the cytoplasm. Functionally, IF-3 binds to the 30S ribosomal subunit and shifts the equilibrium between 70S ribosomes and their 50S and 30S subunits in favor of the free subunits, thus enhancing the availability of 30S subunits on which protein synthesis initiation begins. The polypeptide is Translation initiation factor IF-3 (Porphyromonas gingivalis (strain ATCC 33277 / DSM 20709 / CIP 103683 / JCM 12257 / NCTC 11834 / 2561)).